Reading from the N-terminus, the 67-residue chain is UPF0434 protein Bcep1808_2639 (67 aa).

This sequence belongs to the UPF0434 family.

The protein is UPF0434 protein Bcep1808_2639 of Burkholderia vietnamiensis (strain G4 / LMG 22486) (Burkholderia cepacia (strain R1808)).